The primary structure comprises 101 residues: DNA-binding protein Fis (101 aa).

Positions 77 to 96 (QTRAANMLGINRGTLRKKLK) form a DNA-binding region, H-T-H motif.

The protein belongs to the transcriptional regulatory Fis family. In terms of assembly, homodimer.

Activates ribosomal RNA transcription. Plays a direct role in upstream activation of rRNA promoters. This chain is DNA-binding protein Fis, found in Shewanella frigidimarina (strain NCIMB 400).